We begin with the raw amino-acid sequence, 564 residues long: Nucleoprotein (564 aa).

The interval 54-236 (LRKTKRGEED…VTKDESSINI (183 aa)) is binding site for the cap structure m7GTP. Aspartate 380 and glutamate 382 together coordinate Mn(2+). Residues glutamate 390, cysteine 497, histidine 500, and cysteine 525 each coordinate Zn(2+). Aspartate 529 provides a ligand contact to Mn(2+).

Belongs to the arenaviridae nucleocapsid protein family. In terms of assembly, homomultimerizes to form the nucleocapsid. Binds to viral genomic RNA. Interacts with glycoprotein G2. Interacts with protein Z; this interaction probably directs the encapsidated genome to budding sites. Interacts with protein L; this interaction does not interfere with Z-L interaction. Interacts with host IKBKE (via Protein kinase domain); the interaction inhibits IKBKE kinase activity.

The protein localises to the virion. Its subcellular location is the host cytoplasm. Its function is as follows. Encapsidates the genome, protecting it from nucleases. The encapsidated genomic RNA is termed the nucleocapsid (NC). Serves as template for viral transcription and replication. The increased presence of protein N in host cell does not seem to trigger the switch from transcription to replication as observed in other negative strain RNA viruses. Through the interaction with host IKBKE, strongly inhibits the phosphorylation and nuclear translocation of host IRF3, a protein involved in interferon activation pathway, leading to the inhibition of interferon-beta and IRF3-dependent promoters activation. Also encodes a functional 3'-5' exoribonuclease that degrades preferentially dsRNA substrates and thereby participates in the suppression of interferon induction. This chain is Nucleoprotein, found in Akodon azarae (Azara's grass mouse).